The chain runs to 644 residues: L-aspartate oxidase 2-a, chloroplastic (644 aa).

Residues S94–A97, K116, N123–G130, and D294 each bind FAD. R369 serves as the catalytic Proton donor/acceptor. FAD-binding positions include E454 and S470–L471.

It belongs to the FAD-dependent oxidoreductase 2 family. NadB subfamily. FAD serves as cofactor.

It is found in the plastid. It localises to the chloroplast. It carries out the reaction L-aspartate + O2 = iminosuccinate + H2O2. It functions in the pathway alkaloid biosynthesis; nicotine biosynthesis. It participates in cofactor biosynthesis; NAD(+) biosynthesis; iminoaspartate from L-aspartate (oxidase route): step 1/1. In terms of biological role, involved in the biosynthesis of pyridine alkaloid natural products, leading mainly to the production of anabasine, anatabine, nicotine and nornicotine, effective deterrents against herbivores with antiparasitic and pesticide properties (neurotoxins); nornicotine serves as the precursor in the synthesis of the carcinogen compound N'-nitrosonornicotine (NNN). Catalyzes the oxidation of L-aspartate to iminoaspartate. The protein is L-aspartate oxidase 2-a, chloroplastic of Nicotiana tabacum (Common tobacco).